Reading from the N-terminus, the 388-residue chain is Nitric oxide reductase FlRd-NAD(+) reductase (388 aa).

This sequence belongs to the FAD-dependent oxidoreductase family. The cofactor is FAD.

Its subcellular location is the cytoplasm. It carries out the reaction 2 reduced [nitric oxide reductase rubredoxin domain] + NAD(+) + H(+) = 2 oxidized [nitric oxide reductase rubredoxin domain] + NADH. The protein operates within nitrogen metabolism; nitric oxide reduction. One of at least two accessory proteins for anaerobic nitric oxide (NO) reductase. Reduces the rubredoxin moiety of NO reductase. The chain is Nitric oxide reductase FlRd-NAD(+) reductase from Aeromonas salmonicida (strain A449).